A 74-amino-acid chain; its full sequence is Ubiquitin-like protein FUBI (74 aa).

Belongs to the ubiquitin family.

This is Ubiquitin-like protein FUBI (Fau) from Rattus norvegicus (Rat).